The primary structure comprises 242 residues: GATA zinc finger domain-containing protein 1 (242 aa).

A GATA-type zinc finger spans residues 9 to 33; that stretch reads CAVCKTQSSSMWKKGNQGEILCNGC. The disordered stretch occupies residues 44-85; the sequence is GASASSTIQQNNGGGKQSKQEIHRRSARLRSTKYKAPASEKK. The segment covering 45–54 has biased composition (low complexity); sequence ASASSTIQQN.

The protein resides in the nucleus. Its function is as follows. Component of some chromatin complex recruited to chromatin sites methylated 'Lys-4' of histone H3 (H3K4me), with a preference for trimethylated form (H3K4me3). This Danio rerio (Zebrafish) protein is GATA zinc finger domain-containing protein 1 (gatad1).